Consider the following 296-residue polypeptide: tRNA dimethylallyltransferase (296 aa).

An ATP-binding site is contributed by 19 to 26; sequence GPTASGKS. 21 to 26 serves as a coordination point for substrate; the sequence is TASGKS.

Belongs to the IPP transferase family. As to quaternary structure, monomer. Requires Mg(2+) as cofactor.

The enzyme catalyses adenosine(37) in tRNA + dimethylallyl diphosphate = N(6)-dimethylallyladenosine(37) in tRNA + diphosphate. Its function is as follows. Catalyzes the transfer of a dimethylallyl group onto the adenine at position 37 in tRNAs that read codons beginning with uridine, leading to the formation of N6-(dimethylallyl)adenosine (i(6)A). The sequence is that of tRNA dimethylallyltransferase from Dinoroseobacter shibae (strain DSM 16493 / NCIMB 14021 / DFL 12).